A 609-amino-acid polypeptide reads, in one-letter code: Replication protein E1 (609 aa).

A Nuclear localization signal motif is present at residues 81–83; sequence KRK. Phosphoserine; by host is present on residues Ser-87 and Ser-94. The Nuclear export signal motif lies at 93 to 102; that stretch reads LSPRLQSITI. The segment at 149 to 312 is DNA-binding region; sequence QGVKGLGIVK…TMINHQTAQA (164 aa). The SF3 helicase domain occupies 411–561; that stretch reads INFIRFLDIF…FPFDNNNMPQ (151 aa). 437-444 provides a ligand contact to ATP; that stretch reads GPPDTGKS. Lys-518 is covalently cross-linked (Glycyl lysine isopeptide (Lys-Gly) (interchain with G-Cter in SUMO)). The segment at 584–609 is disordered; the sequence is DQEEEGDDGQSQRTFQCTAREPNGHL.

Belongs to the papillomaviridae E1 protein family. Can form hexamers. Interacts with E2 protein; this interaction increases E1 DNA binding specificity. Interacts with host DNA polymerase subunit POLA2. Interacts with host single stranded DNA-binding protein RPA1. Interacts with host TOP1; this interaction stimulates the enzymatic activity of TOP1. In terms of processing, phosphorylated. Post-translationally, sumoylated.

It localises to the host nucleus. It carries out the reaction Couples ATP hydrolysis with the unwinding of duplex DNA by translocating in the 3'-5' direction.. The enzyme catalyses ATP + H2O = ADP + phosphate + H(+). Functionally, ATP-dependent DNA 3'-5' helicase required for initiation of viral DNA replication. It forms a complex with the viral E2 protein. The E1-E2 complex binds to the replication origin which contains binding sites for both proteins. During the initial step, a dimer of E1 interacts with a dimer of protein E2 leading to a complex that binds the viral origin of replication with high specificity. Then, a second dimer of E1 displaces the E2 dimer in an ATP-dependent manner to form the E1 tetramer. Following this, two E1 monomers are added to each half of the site, which results in the formation of two E1 trimers on the viral ori. Subsequently, two hexamers will be created. The double hexamer acts as a bi-directional helicase machinery and unwinds the viral DNA and then recruits the host DNA polymerase to start replication. The chain is Replication protein E1 from Homo sapiens (Human).